A 102-amino-acid chain; its full sequence is Virulence plasmid protein pGP4-D (102 aa).

This is Virulence plasmid protein pGP4-D from Chlamydia trachomatis serovar L2 (strain ATCC VR-902B / DSM 19102 / 434/Bu).